A 235-amino-acid chain; its full sequence is Uridylate kinase (235 aa).

9–12 provides a ligand contact to ATP; it reads KLSG. UMP is bound at residue glycine 51. Residues glycine 52 and arginine 56 each contribute to the ATP site. Residues aspartate 71 and 132 to 139 contribute to the UMP site; that span reads TGNPYFTT. ATP is bound by residues threonine 159, tyrosine 165, and aspartate 168.

This sequence belongs to the UMP kinase family. Homohexamer.

The protein localises to the cytoplasm. The catalysed reaction is UMP + ATP = UDP + ADP. Its pathway is pyrimidine metabolism; CTP biosynthesis via de novo pathway; UDP from UMP (UMPK route): step 1/1. With respect to regulation, inhibited by UTP. Its function is as follows. Catalyzes the reversible phosphorylation of UMP to UDP. This is Uridylate kinase from Cytophaga hutchinsonii (strain ATCC 33406 / DSM 1761 / CIP 103989 / NBRC 15051 / NCIMB 9469 / D465).